The sequence spans 207 residues: Large ribosomal subunit protein uL4 (207 aa).

The protein belongs to the universal ribosomal protein uL4 family. As to quaternary structure, part of the 50S ribosomal subunit.

Its function is as follows. One of the primary rRNA binding proteins, this protein initially binds near the 5'-end of the 23S rRNA. It is important during the early stages of 50S assembly. It makes multiple contacts with different domains of the 23S rRNA in the assembled 50S subunit and ribosome. Functionally, forms part of the polypeptide exit tunnel. This Rickettsia conorii (strain ATCC VR-613 / Malish 7) protein is Large ribosomal subunit protein uL4.